Here is a 563-residue protein sequence, read N- to C-terminus: MDYLLTSPSSLRFSDFISSIPKETDHKWLRFSVNLGDARRSTRTRITCGAISSRRKLAERESAERENRVLVRSLMSRISDREPLVKTLDKYVKVVRCDHCFLLFEELGKSDKWLQCLEVFRWMQKQRWYIPDNGVYSKLISVMGKKGQTRMAMWLFSEMKNSGCRPDASVYNALITAHLHTRDKAKALEKVRGYLDKMKGIERCQPNVVTYNILLRAFAQSGKVDQVNALFKDLDMSPVSPDVYTFNGVMDAYGKNGMIKEMEAVLTRMRSNECKPDIITFNVLIDSYGKKQEFEKMEQTFKSLMRSKEKPTLPTFNSMIINYGKARMIDKAEWVFKKMNDMNYIPSFITYECMIMMYGYCGSVSRAREIFEEVGESDRVLKASTLNAMLEVYCRNGLYIEADKLFHNASAFRVHPDASTYKFLYKAYTKADMKEQVQILMKKMEKDGIVPNKRFFLEALEVFGSRLPGSGSENRKSTRSSRSRDSPKGRGGNQLTEFQDKDNKHVFRAVQDCRKNYLENLSGHDKGSRDESRKPSQEKQPLFASDQNNMMIKEKKELFTRVL.

Residues 1–47 constitute a chloroplast transit peptide; it reads MDYLLTSPSSLRFSDFISSIPKETDHKWLRFSVNLGDARRSTRTRIT. PPR repeat units follow at residues 132 to 166, 167 to 197, 207 to 241, 242 to 276, 277 to 311, 312 to 346, 347 to 381, 382 to 416, and 417 to 451; these read DNGV…GCRP, DASV…YLDK, NVVT…PVSP, DVYT…ECKP, DIIT…KEKP, TLPT…NYIP, SFIT…DRVL, KAST…RVHP, and DAST…GIVP. Disordered stretches follow at residues 468-501 and 520-551; these read PGSG…FQDK and NLSG…NNMM. Residues 520 to 537 are compositionally biased toward basic and acidic residues; it reads NLSGHDKGSRDESRKPSQ.

It belongs to the PPR family. P subfamily.

The protein resides in the plastid. It localises to the chloroplast. Essential for embryo development. The sequence is that of Pentatricopeptide repeat-containing protein At4g39620, chloroplastic from Arabidopsis thaliana (Mouse-ear cress).